The sequence spans 175 residues: Catabolic 3-dehydroquinase (175 aa).

The active-site Proton acceptor is the Tyr26. Asn104, His110, and Asp117 together coordinate substrate. His130 acts as the Proton donor in catalysis. Residues 131–132 (VS) and Arg141 each bind substrate.

The protein belongs to the type-II 3-dehydroquinase family. As to quaternary structure, homododecamer. Adopts a ring-like structure, composed of an arrangement of two hexameric rings stacked on top of one another.

It carries out the reaction 3-dehydroquinate = 3-dehydroshikimate + H2O. It functions in the pathway aromatic compound metabolism; 3,4-dihydroxybenzoate biosynthesis; 3,4-dihydroxybenzoate from 3-dehydroquinate: step 1/2. Functionally, is involved in the catabolism of quinate. Allows the utilization of quinate as carbon source via the beta-ketoadipate pathway. In Sordaria macrospora (strain ATCC MYA-333 / DSM 997 / K(L3346) / K-hell), this protein is Catabolic 3-dehydroquinase.